A 479-amino-acid polypeptide reads, in one-letter code: GTPase Der (479 aa).

2 EngA-type G domains span residues 3 to 167 and 191 to 366; these read FTLA…EAAA and LQIA…ATWN. GTP is bound by residues 9–16, 56–60, 119–122, 197–204, 244–248, and 309–312; these read GRPNVGKS, DTAGL, NKAE, GRPNAGKS, DTAGM, and NKWD. In terms of domain architecture, KH-like spans 367–453; that stretch reads TRISTARLNQ…RLWMRSQADD (87 aa). Residues 449-479 are disordered; it reads SQADDNPYKNRKKSTPSRLNKHVRKGETKKG. Positions 457–472 are enriched in basic residues; the sequence is KNRKKSTPSRLNKHVR.

This sequence belongs to the TRAFAC class TrmE-Era-EngA-EngB-Septin-like GTPase superfamily. EngA (Der) GTPase family. As to quaternary structure, associates with the 50S ribosomal subunit.

Its function is as follows. GTPase that plays an essential role in the late steps of ribosome biogenesis. The protein is GTPase Der of Jannaschia sp. (strain CCS1).